A 297-amino-acid chain; its full sequence is Probable endonuclease 4 (297 aa).

Zn(2+)-binding residues include His-68, His-109, Glu-144, Asp-178, His-181, His-213, Asp-226, His-228, and Glu-258.

This sequence belongs to the AP endonuclease 2 family. The cofactor is Zn(2+).

The catalysed reaction is Endonucleolytic cleavage to 5'-phosphooligonucleotide end-products.. Its function is as follows. Endonuclease IV plays a role in DNA repair. It cleaves phosphodiester bonds at apurinic or apyrimidinic (AP) sites, generating a 3'-hydroxyl group and a 5'-terminal sugar phosphate. The chain is Probable endonuclease 4 from Lysinibacillus sphaericus (strain C3-41).